The primary structure comprises 125 residues: Acidic phospholipase A2 6 (125 aa).

A signal peptide is located at residue S1. Residues 2–7 (NRPMPL) constitute a propeptide that is removed on maturation. 7 disulfides stabilise this stretch: C18-C77, C33-C124, C35-C50, C49-C105, C56-C98, C66-C91, and C84-C96. D30 provides a ligand contact to Zn(2+). Residues Y34 and G36 each contribute to the Ca(2+) site. H53 is an active-site residue. D54 is a binding site for Ca(2+). D99 is a catalytic residue.

As to quaternary structure, heterodimer formed between isoform 5 and isoform 6 in presence of zinc ion and monomer in absence of zinc ion. The cofactor is Ca(2+). As to expression, expressed by the venom gland.

It is found in the secreted. The enzyme catalyses a 1,2-diacyl-sn-glycero-3-phosphocholine + H2O = a 1-acyl-sn-glycero-3-phosphocholine + a fatty acid + H(+). Functionally, PLA2 catalyzes the calcium-dependent hydrolysis of the 2-acyl groups in 3-sn-phosphoglycerides. This is Acidic phospholipase A2 6 from Naja sagittifera (Andaman cobra).